Consider the following 90-residue polypeptide: ATP synthase subunit c (90 aa).

A run of 2 helical transmembrane segments spans residues 4–24 and 53–73; these read FVYSAVAAGFGIAIAAFGCGI and IGLAMIESLSIYALVVSLILI.

Belongs to the ATPase C chain family. F-type ATPases have 2 components, F(1) - the catalytic core - and F(0) - the membrane proton channel. F(1) has five subunits: alpha(3), beta(3), gamma(1), delta(1), epsilon(1). F(0) has three main subunits: a(1), b(2) and c(10-14). The alpha and beta chains form an alternating ring which encloses part of the gamma chain. F(1) is attached to F(0) by a central stalk formed by the gamma and epsilon chains, while a peripheral stalk is formed by the delta and b chains.

It is found in the cell inner membrane. Functionally, f(1)F(0) ATP synthase produces ATP from ADP in the presence of a proton or sodium gradient. F-type ATPases consist of two structural domains, F(1) containing the extramembraneous catalytic core and F(0) containing the membrane proton channel, linked together by a central stalk and a peripheral stalk. During catalysis, ATP synthesis in the catalytic domain of F(1) is coupled via a rotary mechanism of the central stalk subunits to proton translocation. Key component of the F(0) channel; it plays a direct role in translocation across the membrane. A homomeric c-ring of between 10-14 subunits forms the central stalk rotor element with the F(1) delta and epsilon subunits. This Syntrophobacter fumaroxidans (strain DSM 10017 / MPOB) protein is ATP synthase subunit c.